Consider the following 110-residue polypeptide: MSDDRRRGDEDGGAGTGVITKTKPKTKKPSLYKVLLLNDDYTPMEFVVHVLERFFNKGRDEATVIMLHVHQHGVGICGLYTYEVAETKVTQVMDFAQQHQHPLQCTMERE.

Residues 1–10 (MSDDRRRGDE) show a composition bias toward basic and acidic residues. The tract at residues 1–27 (MSDDRRRGDEDGGAGTGVITKTKPKTK) is disordered.

It belongs to the ClpS family. As to quaternary structure, binds to the N-terminal domain of the chaperone ClpA.

In terms of biological role, involved in the modulation of the specificity of the ClpAP-mediated ATP-dependent protein degradation. This chain is ATP-dependent Clp protease adapter protein ClpS, found in Parvibaculum lavamentivorans (strain DS-1 / DSM 13023 / NCIMB 13966).